A 427-amino-acid chain; its full sequence is 3-phosphoshikimate 1-carboxyvinyltransferase (427 aa).

3-phosphoshikimate-binding residues include Lys27, Ser28, and Arg32. Lys27 contacts phosphoenolpyruvate. Phosphoenolpyruvate is bound by residues Gly95 and Arg123. 3-phosphoshikimate is bound by residues Ser166, Ser167, Gln168, Ser192, Asp305, and Lys332. Residue Gln168 participates in phosphoenolpyruvate binding. Asp305 acts as the Proton acceptor in catalysis. Phosphoenolpyruvate contacts are provided by Arg336 and Arg377.

Belongs to the EPSP synthase family. As to quaternary structure, monomer.

It is found in the cytoplasm. The enzyme catalyses 3-phosphoshikimate + phosphoenolpyruvate = 5-O-(1-carboxyvinyl)-3-phosphoshikimate + phosphate. Its pathway is metabolic intermediate biosynthesis; chorismate biosynthesis. In terms of biological role, catalyzes the transfer of the enolpyruvyl moiety of phosphoenolpyruvate (PEP) to the 5-hydroxyl of shikimate-3-phosphate (S3P) to produce enolpyruvyl shikimate-3-phosphate and inorganic phosphate. This chain is 3-phosphoshikimate 1-carboxyvinyltransferase, found in Aeropyrum pernix (strain ATCC 700893 / DSM 11879 / JCM 9820 / NBRC 100138 / K1).